We begin with the raw amino-acid sequence, 622 residues long: Protein lev-9 (622 aa).

An N-terminal signal peptide occupies residues 1 to 16 (MRFLLLLAISITYASA). The 45-residue stretch at 17-61 (LSCPEVTLSQRPKHCKKECIADEDCKRNKRCMCDGECGLSCVNPI) folds into the WAP; atypical domain. 19 disulfides stabilise this stretch: C19/C49, C35/C47, C41/C57, C64/C105, C91/C118, C124/C171, C154/C188, C193/C233, C219/C246, C251/C291, C277/C304, C309/C349, C335/C362, C366/C409, C395/C420, C425/C467, C452/C481, C486/C543, and C529/C556. Sushi domains follow at residues 62 to 120 (AMCH…VCRL), 122 to 190 (LKCG…RCKA), 191 to 248 (RACP…NCKA), 249 to 306 (TECS…RCEE), 307 to 364 (IRCS…RCLA), 365 to 422 (SCRV…VCSP), 423 to 483 (LSCH…KCLP), and 484 to 558 (SWCE…KCVS). Residue N411 is glycosylated (N-linked (GlcNAc...) asparagine). A propeptide spanning residues 576–622 (SLPGRAVREYVDDELSTHRQHSGKCGIVSGKLERMIMQHSDNGVSVC) is cleaved from the precursor.

In terms of processing, proteolytic processing of the C-terminus is required for clustering activity but not for secretion nor traffic.

It localises to the synapse. The protein localises to the secreted. Scaffolding protein that is necessary to cluster acetylcholine receptors at neuromuscular junctions. The sequence is that of Protein lev-9 (lev-9) from Caenorhabditis elegans.